The chain runs to 750 residues: uncharacterized protein (750 aa).

This is an uncharacterized protein from Escherichia coli (strain K12).